Consider the following 339-residue polypeptide: Protein-glutamate methylesterase/protein-glutamine glutaminase 2 (339 aa).

The Response regulatory domain maps to 2–119 (NIGIVNDLPL…GLSTDASPQA (118 aa)). 4-aspartylphosphate is present on Asp-53. The CheB-type methylesterase domain occupies 141 to 336 (PGPAPERGQP…PQLISRITRP (196 aa)). Catalysis depends on residues Ser-158, His-185, and Asp-278.

Belongs to the CheB family. Post-translationally, phosphorylated by CheA. Phosphorylation of the N-terminal regulatory domain activates the methylesterase activity.

The protein resides in the cytoplasm. It carries out the reaction [protein]-L-glutamate 5-O-methyl ester + H2O = L-glutamyl-[protein] + methanol + H(+). It catalyses the reaction L-glutaminyl-[protein] + H2O = L-glutamyl-[protein] + NH4(+). Functionally, involved in chemotaxis. Part of a chemotaxis signal transduction system that modulates chemotaxis in response to various stimuli. Catalyzes the demethylation of specific methylglutamate residues introduced into the chemoreceptors (methyl-accepting chemotaxis proteins or MCP) by CheR. Also mediates the irreversible deamidation of specific glutamine residues to glutamic acid. In Burkholderia lata (strain ATCC 17760 / DSM 23089 / LMG 22485 / NCIMB 9086 / R18194 / 383), this protein is Protein-glutamate methylesterase/protein-glutamine glutaminase 2.